Consider the following 348-residue polypeptide: Propane 2-monooxygenase, reductase component (348 aa).

The 2Fe-2S ferredoxin-type domain maps to 5–95 (HKINFEPVDI…DCTIELLNFD (91 aa)). Positions 39, 44, 47, and 79 each coordinate [2Fe-2S] cluster. One can recognise an FAD-binding FR-type domain in the interval 105 to 206 (IQDVRTEVLA…TGPYGSFTLK (102 aa)).

It belongs to the bacterial ring-hydroxylating dioxygenase ferredoxin reductase family. The propane 2-monooxygenase multicomponent enzyme system is composed of an electron transfer component and a monooxygenase component interacting with the effector protein MimD. The electron transfer component is composed of a reductase (MimB), and the monooxygenase component is formed by a large subunit (MimA) and a small subunit (MimC). It depends on FAD as a cofactor. [2Fe-2S] cluster serves as cofactor.

Its function is as follows. Reductase component of the propane 2-monooxygenase multicomponent enzyme system which is involved in the degradation of propane via the O2-dependent hydroxylation of propane. Reductase catalyzes the transfer of electrons from NADH or NADPH to monooxygenase. The chain is Propane 2-monooxygenase, reductase component from Mycolicibacterium goodii (Mycobacterium goodii).